Consider the following 197-residue polypeptide: HTH-type transcriptional regulator BetI (197 aa).

The region spanning 8 to 68 (PIRRQQLIEA…ATMGYIMSML (61 aa)) is the HTH tetR-type domain. Positions 31–50 (SIALIARLAGVSNGIISHYF) form a DNA-binding region, H-T-H motif.

The protein operates within amine and polyamine biosynthesis; betaine biosynthesis via choline pathway [regulation]. Repressor involved in the biosynthesis of the osmoprotectant glycine betaine. It represses transcription of the choline transporter BetT and the genes of BetAB involved in the synthesis of glycine betaine. The chain is HTH-type transcriptional regulator BetI from Pseudomonas fluorescens (strain ATCC BAA-477 / NRRL B-23932 / Pf-5).